Reading from the N-terminus, the 149-residue chain is Small ribosomal subunit protein uS19 (149 aa).

The protein belongs to the universal ribosomal protein uS19 family.

In terms of biological role, protein S19 forms a complex with S13 that binds strongly to the 16S ribosomal RNA. The sequence is that of Small ribosomal subunit protein uS19 from Methanopyrus kandleri (strain AV19 / DSM 6324 / JCM 9639 / NBRC 100938).